A 198-amino-acid chain; its full sequence is MPIGVPKVPFRLPGEEDAGWVDVYNRLYRERLLFLGQQVDDEIANQLIGIMMYLNGEDENRDMYSYINSPGGAVLPGISVYDAMQFVVPDVHTICMGLAASMGSFILTGGEITKRIALPHARVMIHQPASSYYDGQAGECIMEAEEILKLRDCITRVYAQRTEKPLWVISEDMERDIFMSAKEARAYGIVDLIALEND.

Ser-101 (nucleophile) is an active-site residue. His-126 is a catalytic residue.

The protein belongs to the peptidase S14 family. As to quaternary structure, component of the chloroplastic Clp protease core complex.

The protein resides in the plastid. It is found in the chloroplast stroma. It carries out the reaction Hydrolysis of proteins to small peptides in the presence of ATP and magnesium. alpha-casein is the usual test substrate. In the absence of ATP, only oligopeptides shorter than five residues are hydrolyzed (such as succinyl-Leu-Tyr-|-NHMec, and Leu-Tyr-Leu-|-Tyr-Trp, in which cleavage of the -Tyr-|-Leu- and -Tyr-|-Trp bonds also occurs).. Cleaves peptides in various proteins in a process that requires ATP hydrolysis. Has a chymotrypsin-like activity. Plays a major role in the degradation of misfolded proteins. The sequence is that of ATP-dependent Clp protease proteolytic subunit from Psilotum nudum (Whisk fern).